Here is a 352-residue protein sequence, read N- to C-terminus: ER-derived vesicles protein ERV41 (352 aa).

The Cytoplasmic segment spans residues 1-23 (MAGLKTFDAFPKTEEQYKKKSTK). Residues 24–44 (GGLTSLLTYLFLLFIAWTEFG) traverse the membrane as a helical segment. Residues 45 to 311 (EYFGGYIDQQ…FLVRLVAICS (267 aa)) lie on the Lumenal side of the membrane. The chain crosses the membrane as a helical span at residues 312-332 (FLVYCASWIFTLLDMALITIM). Over 333–352 (GPKWSLRYQPDDKTKGILDR) the chain is Cytoplasmic. The Isoleucine-leucine motif signature appears at 349–350 (IL).

Belongs to the ERGIC family. Interacts with ERV46.

The protein resides in the endoplasmic reticulum membrane. It is found in the golgi apparatus membrane. The protein localises to the cytoplasmic vesicle. It localises to the COPII-coated vesicle membrane. Constituent of COPII-coated endoplasmic reticulum-derived transport vesicles. Required for efficient transport of a subset of secretory proteins to the Golgi. The C-terminal Ile-Leu motif is required for exit from the endoplasmic reticulum. Facilitates retrograde transport from the Golgi to the endoplasmic reticulum. The protein is ER-derived vesicles protein ERV41 (ERV41) of Saccharomyces cerevisiae (strain ATCC 204508 / S288c) (Baker's yeast).